Here is a 363-residue protein sequence, read N- to C-terminus: UDP-N-acetylglucosamine--N-acetylmuramyl-(pentapeptide) pyrophosphoryl-undecaprenol N-acetylglucosamine transferase (363 aa).

Residues 10–12, Asn124, Ser195, Ile250, and Gln295 each bind UDP-N-acetyl-alpha-D-glucosamine; that span reads TGG.

The protein belongs to the glycosyltransferase 28 family. MurG subfamily.

It is found in the cell membrane. The enzyme catalyses di-trans,octa-cis-undecaprenyl diphospho-N-acetyl-alpha-D-muramoyl-L-alanyl-D-glutamyl-meso-2,6-diaminopimeloyl-D-alanyl-D-alanine + UDP-N-acetyl-alpha-D-glucosamine = di-trans,octa-cis-undecaprenyl diphospho-[N-acetyl-alpha-D-glucosaminyl-(1-&gt;4)]-N-acetyl-alpha-D-muramoyl-L-alanyl-D-glutamyl-meso-2,6-diaminopimeloyl-D-alanyl-D-alanine + UDP + H(+). Its pathway is cell wall biogenesis; peptidoglycan biosynthesis. Functionally, cell wall formation. Catalyzes the transfer of a GlcNAc subunit on undecaprenyl-pyrophosphoryl-MurNAc-pentapeptide (lipid intermediate I) to form undecaprenyl-pyrophosphoryl-MurNAc-(pentapeptide)GlcNAc (lipid intermediate II). The polypeptide is UDP-N-acetylglucosamine--N-acetylmuramyl-(pentapeptide) pyrophosphoryl-undecaprenol N-acetylglucosamine transferase (Listeria monocytogenes serotype 4a (strain HCC23)).